The primary structure comprises 156 residues: Small ribosomal subunit protein uS7 (156 aa).

This sequence belongs to the universal ribosomal protein uS7 family. As to quaternary structure, part of the 30S ribosomal subunit. Contacts proteins S9 and S11.

In terms of biological role, one of the primary rRNA binding proteins, it binds directly to 16S rRNA where it nucleates assembly of the head domain of the 30S subunit. Is located at the subunit interface close to the decoding center, probably blocks exit of the E-site tRNA. This Bifidobacterium longum (strain NCC 2705) protein is Small ribosomal subunit protein uS7.